Here is a 246-residue protein sequence, read N- to C-terminus: V-type proton ATPase subunit D 1 (246 aa).

The protein belongs to the V-ATPase D subunit family. V-ATPase is a heteromultimeric enzyme made up of two complexes: the ATP-hydrolytic V1 complex and the proton translocation V0 complex. The V1 complex consists of three catalytic AB heterodimers that form a heterohexamer, three peripheral stalks each consisting of EG heterodimers, one central rotor including subunits D and F, and the regulatory subunits C and H. The proton translocation complex V0 consists of the proton transport subunit a, a ring of proteolipid subunits c9c'', rotary subunit d, subunits e and f, and the accessory subunits VhaAC45 and ATP6AP2.

In terms of biological role, subunit of the V1 complex of vacuolar(H+)-ATPase (V-ATPase), a multisubunit enzyme composed of a peripheral complex (V1) that hydrolyzes ATP and a membrane integral complex (V0) that translocates protons. V-ATPase is responsible for acidifying and maintaining the pH of intracellular compartments and in some cell types, is targeted to the plasma membrane, where it is responsible for acidifying the extracellular environment. This is V-type proton ATPase subunit D 1 (Vha36-1) from Drosophila melanogaster (Fruit fly).